The primary structure comprises 217 residues: Thiamine-phosphate synthase (217 aa).

4-amino-2-methyl-5-(diphosphooxymethyl)pyrimidine contacts are provided by residues 39–43 (QLRRK) and Asn71. The Mg(2+) site is built by Asp72 and Asp91. Ser110 provides a ligand contact to 4-amino-2-methyl-5-(diphosphooxymethyl)pyrimidine. 137–139 (SPT) contacts 2-[(2R,5Z)-2-carboxy-4-methylthiazol-5(2H)-ylidene]ethyl phosphate. Lys140 lines the 4-amino-2-methyl-5-(diphosphooxymethyl)pyrimidine pocket. Residues Gly173 and 193–194 (IS) each bind 2-[(2R,5Z)-2-carboxy-4-methylthiazol-5(2H)-ylidene]ethyl phosphate.

The protein belongs to the thiamine-phosphate synthase family. It depends on Mg(2+) as a cofactor.

The catalysed reaction is 2-[(2R,5Z)-2-carboxy-4-methylthiazol-5(2H)-ylidene]ethyl phosphate + 4-amino-2-methyl-5-(diphosphooxymethyl)pyrimidine + 2 H(+) = thiamine phosphate + CO2 + diphosphate. It carries out the reaction 2-(2-carboxy-4-methylthiazol-5-yl)ethyl phosphate + 4-amino-2-methyl-5-(diphosphooxymethyl)pyrimidine + 2 H(+) = thiamine phosphate + CO2 + diphosphate. It catalyses the reaction 4-methyl-5-(2-phosphooxyethyl)-thiazole + 4-amino-2-methyl-5-(diphosphooxymethyl)pyrimidine + H(+) = thiamine phosphate + diphosphate. The protein operates within cofactor biosynthesis; thiamine diphosphate biosynthesis; thiamine phosphate from 4-amino-2-methyl-5-diphosphomethylpyrimidine and 4-methyl-5-(2-phosphoethyl)-thiazole: step 1/1. Condenses 4-methyl-5-(beta-hydroxyethyl)thiazole monophosphate (THZ-P) and 2-methyl-4-amino-5-hydroxymethyl pyrimidine pyrophosphate (HMP-PP) to form thiamine monophosphate (TMP). The chain is Thiamine-phosphate synthase from Bordetella parapertussis (strain 12822 / ATCC BAA-587 / NCTC 13253).